The following is an 87-amino-acid chain: Small ribosomal subunit protein bS20 (87 aa).

Residues 1 to 22 form a disordered region; it reads MANIKSQIKRIGTNKKAQERNK.

The protein belongs to the bacterial ribosomal protein bS20 family.

Binds directly to 16S ribosomal RNA. The protein is Small ribosomal subunit protein bS20 of Clavibacter michiganensis subsp. michiganensis (strain NCPPB 382).